Here is an 85-residue protein sequence, read N- to C-terminus: Alpha-toxin Amm8 (85 aa).

Residues 1-19 form the signal peptide; it reads MNYLVMISLALLFMTGVES. In terms of domain architecture, LCN-type CS-alpha/beta spans 21–83; the sequence is KDGYIVNDIN…VRTKGPGRCN (63 aa). Cystine bridges form between C31/C82, C35/C55, C41/C65, and C45/C67. Residue R85 is a propeptide, removed by a carboxypeptidase.

This sequence belongs to the long (4 C-C) scorpion toxin superfamily. Sodium channel inhibitor family. Alpha subfamily. As to expression, expressed by the venom gland.

Its subcellular location is the secreted. Functionally, alpha toxins bind voltage-independently at site-3 of sodium channels (Nav) and inhibit the inactivation of the activated channels, thereby blocking neuronal transmission. The toxin principally slows the inactivation process of TTX-sensitive sodium channels. It discriminates neuronal versus muscular sodium channel, as it is more potent on rat brain Nav1.2/SCN2A (EC(50)=29 nM) than on rat skeletal muscle Nav1.4/SCN4A (EC(50)=416 nM). It also shows a weak activity on Nav1.7/SCN9A (EC(50)=1.76 uM). In vivo, the toxin produces pain hypersensibility to mechanical and thermal stimuli. It also exhibits potent analgesic activity (when injected intraperitoneally), increasing hot plate and tail flick withdrawal latencies in a dose-dependent fashion. This paradoxical analgesic action, is significantly suppressed by opioid receptor antagonists, suggesting a pain-induced analgesia mechanism that involves an endogenous opioid system. This led to hypothesis that pain relief induced by peripheral administration of Amm VIII may result from sensitization of primary afferent neurons and subsequent activation of an opioid-dependent noxious inhibitory control. In Androctonus mauritanicus mauritanicus (Scorpion), this protein is Alpha-toxin Amm8.